Reading from the N-terminus, the 696-residue chain is Neurogenic protein big brain (696 aa).

Residues 1–71 (MADESLHTVP…LEFWRSIISE (71 aa)) lie on the Cytoplasmic side of the membrane. A Phosphoserine modification is found at Ser-46. Thr-47 bears the Phosphothreonine mark. A helical transmembrane segment spans residues 72–93 (CLASFMYVFIVCGAAAGVGVGA). Topologically, residues 94–97 (SVSS) are extracellular. A helical membrane pass occupies residues 98-118 (VLLATALASGLAMATLTQCFL). Topologically, residues 119 to 143 (HISGAHINPAVTLALCVVRSISPIR) are cytoplasmic. The short motif at 126–128 (NPA) is the NPA 1 element. Residues 144 to 167 (AAMYITAQCGGGIAGAALLYGVTV) form a helical membrane-spanning segment. Residues 168–189 (PGYQGNLQAAISHSAALAAWER) lie on the Extracellular side of the membrane. A helical transmembrane segment spans residues 190 to 208 (FGVEFILTFLVVLCYFVST). Over 209 to 213 (DPMKK) the chain is Cytoplasmic. The chain crosses the membrane as a helical span at residues 214 to 234 (FMGNSAASIGCAYSACCFVSM). Over 235–256 (PYLNPARSLGPSFVLNKWDSHW) the chain is Extracellular. Residues 238 to 240 (NPA) carry the NPA 2 motif. The chain crosses the membrane as a helical span at residues 257–273 (VYWFGPLVGGMASGLVY). At Tyr-273 the chain carries Phosphotyrosine; by Src. Residues 274–696 (EYIFNSRNRN…HYGMLPLRPN (423 aa)) are Cytoplasmic-facing. Residue Ser-300 is modified to Phosphoserine. The segment at 314–345 (NKYQQSQGTYPRGQSNGNGGGQAAGNGQHQAA) is disordered. Tyr-367 carries the post-translational modification Phosphotyrosine; by Abl. A Phosphotyrosine; by Src modification is found at Tyr-384. The residue at position 394 (Ser-394) is a Phosphoserine. Disordered regions lie at residues 436–634 (MRTQ…KVSA) and 650–696 (TSQG…LRPN). 2 stretches are compositionally biased toward low complexity: residues 439–451 (QQQQQQQQQQQQQ) and 462–472 (QNQNVQNQMQQ). A Phosphotyrosine; by Src modification is found at Tyr-478. The span at 487–532 (QQQPIQQQQQQQQQQQLQQQQPNMGVQQQQMQPPPQMMSDPQQQPQ) shows a compositional bias: low complexity. The span at 549-558 (GNHKYDRRDP) shows a compositional bias: basic and acidic residues. A Phosphoserine modification is found at Ser-576. Residues 576-587 (SDDSSYGSYHGS) are compositionally biased toward low complexity. Positions 599-616 (EPSPPPPPMLMYAPPPQP) are enriched in pro residues. Tyr-610 carries the phosphotyrosine; by Abl modification. Residues 659-686 (QQQQQQQQQQQQQQQQQQQQMMMQQQQQ) show a composition bias toward low complexity.

It belongs to the MIP/aquaporin (TC 1.A.8) family. In terms of processing, phosphorylated at its C-terminus. In terms of tissue distribution, detected in all tissues with neurogenic abilities, for example the neurogenic ectoderm.

It is found in the membrane. Essential for proper differentiation of ectoderm. Acts synergistically with neurogenic locus proteins Notch and Delta during the separation of neural and epidermal cell lineages in response to the lateral inhibition signal. Voltage-insensitive monovalent cation channel. Ion transport is blocked by the presence of divalent cations. This is Neurogenic protein big brain (bib) from Drosophila melanogaster (Fruit fly).